The chain runs to 361 residues: Chorismate synthase (361 aa).

The NADP(+) site is built by Arg48 and Arg54. FMN-binding positions include 125-127 (RSS), 238-239 (NA), Gly278, 293-297 (KPTSS), and Arg319.

The protein belongs to the chorismate synthase family. Homotetramer. FMNH2 serves as cofactor.

The catalysed reaction is 5-O-(1-carboxyvinyl)-3-phosphoshikimate = chorismate + phosphate. It participates in metabolic intermediate biosynthesis; chorismate biosynthesis; chorismate from D-erythrose 4-phosphate and phosphoenolpyruvate: step 7/7. In terms of biological role, catalyzes the anti-1,4-elimination of the C-3 phosphate and the C-6 proR hydrogen from 5-enolpyruvylshikimate-3-phosphate (EPSP) to yield chorismate, which is the branch point compound that serves as the starting substrate for the three terminal pathways of aromatic amino acid biosynthesis. This reaction introduces a second double bond into the aromatic ring system. The protein is Chorismate synthase of Citrobacter koseri (strain ATCC BAA-895 / CDC 4225-83 / SGSC4696).